The primary structure comprises 208 residues: Large ribosomal subunit protein uL4 (208 aa).

The tract at residues 45–77 is disordered; sequence RQGTHKAKERAEIKGSTRKIKKQKGTGTARAGS.

This sequence belongs to the universal ribosomal protein uL4 family. Part of the 50S ribosomal subunit.

One of the primary rRNA binding proteins, this protein initially binds near the 5'-end of the 23S rRNA. It is important during the early stages of 50S assembly. It makes multiple contacts with different domains of the 23S rRNA in the assembled 50S subunit and ribosome. Its function is as follows. Forms part of the polypeptide exit tunnel. This is Large ribosomal subunit protein uL4 from Christiangramia forsetii (strain DSM 17595 / CGMCC 1.15422 / KT0803) (Gramella forsetii).